The chain runs to 257 residues: Glycerol-3-phosphate acyltransferase (257 aa).

A run of 6 helical transmembrane segments spans residues 7–27 (IVMA…LIGS), 66–86 (ILTL…TYII), 104–124 (AILV…PIFF), 140–160 (ITVD…ILLI), 164–184 (MSLS…VPGI), and 203–223 (YVIK…SLLI).

It belongs to the PlsY family. As to quaternary structure, probably interacts with PlsX.

The protein localises to the cell membrane. The enzyme catalyses an acyl phosphate + sn-glycerol 3-phosphate = a 1-acyl-sn-glycero-3-phosphate + phosphate. The protein operates within lipid metabolism; phospholipid metabolism. Functionally, catalyzes the transfer of an acyl group from acyl-phosphate (acyl-PO(4)) to glycerol-3-phosphate (G3P) to form lysophosphatidic acid (LPA). This enzyme utilizes acyl-phosphate as fatty acyl donor, but not acyl-CoA or acyl-ACP. The polypeptide is Glycerol-3-phosphate acyltransferase (Ureaplasma parvum serovar 3 (strain ATCC 700970)).